The following is a 368-amino-acid chain: Phospho-N-acetylmuramoyl-pentapeptide-transferase (368 aa).

Transmembrane regions (helical) follow at residues 50-70, 95-115, 117-137, 156-176, 183-203, 218-238, 242-262, 284-304, and 347-367; these read LLAL…VVPL, PTMG…ILAG, SPLV…GWLD, LCLQ…QQGW, ITLP…LAVF, LDGL…LWLA, PAIA…LLHN, AIAI…LFVL, and TQVV…CWLL.

The protein belongs to the glycosyltransferase 4 family. MraY subfamily. The cofactor is Mg(2+).

The protein resides in the cell inner membrane. The catalysed reaction is UDP-N-acetyl-alpha-D-muramoyl-L-alanyl-gamma-D-glutamyl-meso-2,6-diaminopimeloyl-D-alanyl-D-alanine + di-trans,octa-cis-undecaprenyl phosphate = di-trans,octa-cis-undecaprenyl diphospho-N-acetyl-alpha-D-muramoyl-L-alanyl-D-glutamyl-meso-2,6-diaminopimeloyl-D-alanyl-D-alanine + UMP. Its pathway is cell wall biogenesis; peptidoglycan biosynthesis. Functionally, catalyzes the initial step of the lipid cycle reactions in the biosynthesis of the cell wall peptidoglycan: transfers peptidoglycan precursor phospho-MurNAc-pentapeptide from UDP-MurNAc-pentapeptide onto the lipid carrier undecaprenyl phosphate, yielding undecaprenyl-pyrophosphoryl-MurNAc-pentapeptide, known as lipid I. This chain is Phospho-N-acetylmuramoyl-pentapeptide-transferase, found in Synechococcus sp. (strain ATCC 27144 / PCC 6301 / SAUG 1402/1) (Anacystis nidulans).